The primary structure comprises 104 residues: MSTPNTHLLCLIATDLRKHFFAVLVGMLIVCSAIYNVYTTHKTRGLVTQIERLAQDKDDLMMEWRNLLIEEHTLDEHSRIRRIALKKLSMSQATKKNSVLVELR.

Residues 1–19 (MSTPNTHLLCLIATDLRKH) lie on the Cytoplasmic side of the membrane. Residues 20-39 (FFAVLVGMLIVCSAIYNVYT) traverse the membrane as a helical segment. Over 40 to 104 (THKTRGLVTQ…KKNSVLVELR (65 aa)) the chain is Periplasmic.

This sequence belongs to the FtsL family. As to quaternary structure, part of a complex composed of FtsB, FtsL and FtsQ.

The protein resides in the cell inner membrane. Its function is as follows. Essential cell division protein. May link together the upstream cell division proteins, which are predominantly cytoplasmic, with the downstream cell division proteins, which are predominantly periplasmic. The polypeptide is Cell division protein FtsL (Psychromonas ingrahamii (strain DSM 17664 / CCUG 51855 / 37)).